A 141-amino-acid polypeptide reads, in one-letter code: Large ribosomal subunit protein uL16 (141 aa).

Residues 1-17 are compositionally biased toward basic residues; sequence MLQPKRTKYRKVQKGKM. Positions 1-29 are disordered; sequence MLQPKRTKYRKVQKGKMKGNSQRGHELSN.

Belongs to the universal ribosomal protein uL16 family. Part of the 50S ribosomal subunit.

Its function is as follows. Binds 23S rRNA and is also seen to make contacts with the A and possibly P site tRNAs. The chain is Large ribosomal subunit protein uL16 from Flavobacterium psychrophilum (strain ATCC 49511 / DSM 21280 / CIP 103535 / JIP02/86).